The primary structure comprises 267 residues: MSKATYKERAATHPSPVAAKLFNIMHEKQTNLCASLDVRTTKELLELVEALGPKICLLKTHVDILTDFSMEGTVKPLKALSAKYNFLLFEDRKFADIGNTVKLQYSAGVYRIAEWADITNAHGVVGPGIVSGLKQAAEEVTKEPRGLLMLAELSCKGSLATGEYTKGTVDIAKSDKDFVIGFIAQRDMGGRDEGYDWLIMTPGVGLDDKGDALGQQYRTVDDVVSTGSDIIIVGRGLFAKGRDAKVEGERYRKAGWEAYLRRCGQQN.

The residue at position 2 (serine 2) is an N-acetylserine. Substrate is bound by residues aspartate 37, 59–61 (KTH), and 91–100 (DRKFADIGNT). The active-site Proton donor is lysine 93. Glycyl lysine isopeptide (Lys-Gly) (interchain with G-Cter in ubiquitin) cross-links involve residues lysine 93 and lysine 209. The substrate site is built by tyrosine 217 and arginine 235. Lysine 253 is covalently cross-linked (Glycyl lysine isopeptide (Lys-Gly) (interchain with G-Cter in ubiquitin)).

The protein belongs to the OMP decarboxylase family.

It catalyses the reaction orotidine 5'-phosphate + H(+) = UMP + CO2. It functions in the pathway pyrimidine metabolism; UMP biosynthesis via de novo pathway; UMP from orotate: step 2/2. The sequence is that of Orotidine 5'-phosphate decarboxylase (URA3) from Saccharomyces cerevisiae (strain ATCC 204508 / S288c) (Baker's yeast).